Here is a 306-residue protein sequence, read N- to C-terminus: Ornithine carbamoyltransferase 1, anabolic (306 aa).

Carbamoyl phosphate is bound by residues 53-56, Gln-80, Arg-104, and 131-134; these read STRT and HPCQ. Residues Asn-162, Asp-219, and 223-224 contribute to the L-ornithine site; that span reads SM. Carbamoyl phosphate-binding positions include 259 to 260 and Arg-287; that span reads CL.

Belongs to the aspartate/ornithine carbamoyltransferase superfamily. OTCase family. In terms of assembly, homotrimer.

It is found in the cytoplasm. The catalysed reaction is carbamoyl phosphate + L-ornithine = L-citrulline + phosphate + H(+). It participates in amino-acid biosynthesis; L-arginine biosynthesis; L-arginine from L-ornithine and carbamoyl phosphate: step 1/3. Reversibly inhibited by inhibited by phaseolotoxin and octicidine. In terms of biological role, reversibly catalyzes the transfer of the carbamoyl group from carbamoyl phosphate (CP) to the N(epsilon) atom of ornithine (ORN) to produce L-citrulline, which is a substrate for argininosuccinate synthetase, the enzyme involved in the final step in arginine biosynthesis. The sequence is that of Ornithine carbamoyltransferase 1, anabolic from Pseudomonas savastanoi pv. phaseolicola (Pseudomonas syringae pv. phaseolicola).